The following is a 459-amino-acid chain: Alcohol acyl transferase 2 (459 aa).

Active-site proton acceptor residues include histidine 164 and asparagine 385.

This sequence belongs to the plant acyltransferase family. Highly expressed in the cortex and skin of ripe fruit.

In terms of biological role, involved in the biosynthesis of volatile esters which confer ripe apple fruit flavor. Alcohol acyl transferase that can use a wide range of alcohols as substrate to produce esters. In Malus domestica (Apple), this protein is Alcohol acyl transferase 2.